The following is a 78-amino-acid chain: Serine rich endogenous peptide 12 (78 aa).

The first 24 residues, 1–24, serve as a signal peptide directing secretion; it reads MRNTISSKMGQVLIVLLLLCTVLC. A propeptide spans 25 to 43 (removed in mature form); sequence RTESALPSGQHSVLLTGRR. The disordered stretch occupies residues 47-78; sequence SGASGPVRSSQSSQAGGRFNDADPIAIDYGKY. The SCOOP motif motif lies at 50–64; the sequence is SGPVRSSQSSQAGGR. The short motif at 56–58 is the SxS motif essential for MIK2 binding element; the sequence is SQS.

Belongs to the serine rich endogenous peptide (SCOOP) phytocytokine family. In terms of assembly, interacts with MIK2 (via extracellular leucine-rich repeat domain); this interaction triggers the formation of complex between MIK2 and the BAK1/SERK3 and SERK4 coreceptors, and subsequent BAK1 activation by phosphorylation on 'Ser-612'. As to expression, mostly expressed in the whole root system, and, to a lower extent, in seedlings shoots.

Its subcellular location is the cell membrane. The protein localises to the secreted. It localises to the extracellular space. It is found in the apoplast. In terms of biological role, brassicaceae-specific phytocytokine (plant endogenous peptide released into the apoplast) perceived by MIK2 in a BAK1/SERK3 and SERK4 coreceptors-dependent manner, that modulates various physiological and antimicrobial processes including root growth prevention, phospholipid signaling pathway activation (e.g. accumulation of phosphatidic acid (PA), but transient reduction of phosphatidylinositol 4,5-bisphosphate (PIP(2)) levels) and reactive oxygen species (ROS) response regulation. Moderates primary root growth, and regulates root meristems and cell elongation; this root growth regulation is associated with the modulation of ROS metabolism and alteration of cell wall structure, and depends on variations in many genes expression. Promotes ROS (e.g. superoxide anion O(2) and hydrogen peroxide H(2)O(2)) production and MAPK (e.g. MPK3, MPK4 and MPK6) activation in a MIK2-dependent manner, thus leading to the up-regulation of immune-related marker genes (e.g. WRKY30, WRKY33 and CYP81F2). Involved in biotic and oxidative stress responses; acts as a negative regulator of defense against necrotrophic pathogens such as the bacteria Erwinia amylovora and the fungus Alternaria brassicicola. Able to prime defense responses against the pathogenic bacteria Pseudomonas syringae pv. tomato DC3000. Contributes to the triggering of defense responses toward generalist herbivores such as Spodoptera littoralis, probably via the activation of jasmonate and indole glucosinolate biosynthesis. Triggers the expression of several PROSCOOP genes (e.g. PROSCOOP3, PROSCOOP7, PROSCOOP12 and PROSCOOP13). This is Serine rich endogenous peptide 12 from Arabidopsis thaliana (Mouse-ear cress).